Consider the following 330-residue polypeptide: tRNA uridine(34) hydroxylase (330 aa).

The region spanning 123-217 is the Rhodanese domain; it reads SDPETILVDT…YLEEVPKEES (95 aa). Residue Cys177 is the Cysteine persulfide intermediate of the active site. The disordered stretch occupies residues 310 to 330; that stretch reads LNKQQKQQAKEIARKKAKSEI. The segment covering 317–330 has biased composition (basic and acidic residues); that stretch reads QAKEIARKKAKSEI.

Belongs to the TrhO family.

The catalysed reaction is uridine(34) in tRNA + AH2 + O2 = 5-hydroxyuridine(34) in tRNA + A + H2O. In terms of biological role, catalyzes oxygen-dependent 5-hydroxyuridine (ho5U) modification at position 34 in tRNAs. This Francisella philomiragia subsp. philomiragia (strain ATCC 25017 / CCUG 19701 / FSC 153 / O#319-036) protein is tRNA uridine(34) hydroxylase.